A 256-amino-acid chain; its full sequence is Imidazole glycerol phosphate synthase subunit hisF1 (256 aa).

Catalysis depends on residues Asp12 and Asp131.

Belongs to the HisA/HisF family. In terms of assembly, heterodimer of HisH and HisF.

It localises to the cytoplasm. It catalyses the reaction 5-[(5-phospho-1-deoxy-D-ribulos-1-ylimino)methylamino]-1-(5-phospho-beta-D-ribosyl)imidazole-4-carboxamide + L-glutamine = D-erythro-1-(imidazol-4-yl)glycerol 3-phosphate + 5-amino-1-(5-phospho-beta-D-ribosyl)imidazole-4-carboxamide + L-glutamate + H(+). It participates in amino-acid biosynthesis; L-histidine biosynthesis; L-histidine from 5-phospho-alpha-D-ribose 1-diphosphate: step 5/9. Its function is as follows. IGPS catalyzes the conversion of PRFAR and glutamine to IGP, AICAR and glutamate. The HisF subunit catalyzes the cyclization activity that produces IGP and AICAR from PRFAR using the ammonia provided by the HisH subunit. The sequence is that of Imidazole glycerol phosphate synthase subunit hisF1 (hisF1) from Pseudomonas aeruginosa (strain ATCC 15692 / DSM 22644 / CIP 104116 / JCM 14847 / LMG 12228 / 1C / PRS 101 / PAO1).